A 221-amino-acid chain; its full sequence is Carbonic anhydrase (221 aa).

Residues C57, D59, H112, and C115 each coordinate Zn(2+).

It belongs to the beta-class carbonic anhydrase family. The cofactor is Zn(2+).

Its subcellular location is the cytoplasm. It is found in the nucleus. The protein localises to the mitochondrion intermembrane space. The enzyme catalyses hydrogencarbonate + H(+) = CO2 + H2O. In terms of biological role, catalyzes the reversible hydration of CO(2) to H(2)CO(3). The main role may be to provide inorganic carbon for the bicarbonate-dependent carboxylation reactions catalyzed by pyruvate carboxylase, acetyl-CoA carboxylase and carbamoyl-phosphate synthetase. Involved in protection against oxidative damage. Encodes a substrate for the non-classical protein export pathway for proteins that lack a cleavable signal sequence. The polypeptide is Carbonic anhydrase (NCE103) (Saccharomyces cerevisiae (strain ATCC 204508 / S288c) (Baker's yeast)).